The following is a 744-amino-acid chain: Leukocyte immunoglobulin-like receptor subfamily B member 3A (744 aa).

Residues 1–24 form the signal peptide; that stretch reads MTFTFTALLCLGLTLGLWIPVLTG. Residues 25 to 543 are Extracellular-facing; sequence SLPKPILRVQ…PPDGLQRYLK (519 aa). Ig-like C2-type domains follow at residues 26 to 119, 121 to 221, 223 to 316, 320 to 419, and 426 to 520; these read LPKP…VVTG, YSKP…LVSG, LQKP…VVTG, YHPL…LITG, and FLSV…IVSG. 3 cysteine pairs are disulfide-bonded: Cys49/Cys98, Cys144/Cys197, and Cys246/Cys295. An N-linked (GlcNAc...) asparagine glycan is attached at Asn79. Asn338 carries N-linked (GlcNAc...) asparagine glycosylation. Residues Cys343 and Cys395 are joined by a disulfide bond. N-linked (GlcNAc...) asparagine glycosylation occurs at Asn440. Cys445 and Cys496 are joined by a disulfide. The helical transmembrane segment at 544–564 threads the bilayer; it reads ALIGVSVAFLLFLFILIFILL. The Cytoplasmic portion of the chain corresponds to 565-744; sequence RRRHQEKFRK…PGAVPKNKKQ (180 aa). Positions 572–584 are enriched in basic and acidic residues; that stretch reads FRKDDEDAQKGKE. Disordered stretches follow at residues 572 to 617, 630 to 652, and 667 to 744; these read FRKD…ESLY, ELDT…VEPS, and EQLN…NKKQ. Positions 615–620 match the ITIM motif 1 motif; it reads SLYASV. 2 short sequence motifs (ITIM motif) span residues 695–700 and 725–730; these read VTYAQL and SVYAAL. Phosphotyrosine; by LYN occurs at positions 697 and 727.

Interacts with LYN, PTPN6/SHP-1 and PTPN11/SHP-2. Post-translationally, phosphorylated on tyrosine residues by LYN. Phosphorylation at Tyr-697 and Tyr-727 is important for interaction with PTPN6/SHP-1 and PTPN11/SHP-2.

The protein localises to the cell membrane. May act as receptor for class I MHC antigens. Becomes activated upon coligation with immune receptors, such as FCGR2B and the B-cell receptor. Down-regulates antigen-induced B-cell activation by recruiting phosphatases to its immunoreceptor tyrosine-based inhibitor motifs (ITIM). In Rattus norvegicus (Rat), this protein is Leukocyte immunoglobulin-like receptor subfamily B member 3A.